The chain runs to 420 residues: G2/mitotic-specific cyclin-A (420 aa).

A disordered region spans residues 64-93 (VQGSRIQPTRAAKEKLKPPQNISDSQLVND). Residues 83–93 (QNISDSQLVND) show a composition bias toward polar residues.

The protein belongs to the cyclin family. Cyclin AB subfamily.

Functionally, essential for the control of the cell cycle at the G2/M (mitosis) transition. Interacts with the CDC2 and CDK2 protein kinases to form MPF. G2/M cyclins accumulate steadily during G2 and are abruptly destroyed at mitosis. This is G2/mitotic-specific cyclin-A from Hydra viridissima (Green hydra).